The sequence spans 514 residues: Beta-glucosidase 16 (514 aa).

The first 21 residues, 1–21, serve as a signal peptide directing secretion; sequence MRGKFLSLLLLITLACIGVSA. Residue glutamine 49 participates in a beta-D-glucoside binding. The N-linked (GlcNAc...) asparagine glycan is linked to asparagine 80. Residues histidine 153 and 198 to 199 contribute to the a beta-D-glucoside site; that span reads NE. The active-site Proton donor is the glutamate 199. Residues cysteine 218 and cysteine 226 are joined by a disulfide bond. A beta-D-glucoside is bound at residue tyrosine 343. N-linked (GlcNAc...) asparagine glycosylation occurs at asparagine 357. A beta-D-glucoside contacts are provided by residues glutamate 413, tryptophan 458, 465-466, and phenylalanine 474; that span reads EW. The Nucleophile role is filled by glutamate 413.

This sequence belongs to the glycosyl hydrolase 1 family. As to expression, expressed at low levels in cauline leaves and flowers.

The enzyme catalyses Hydrolysis of terminal, non-reducing beta-D-glucosyl residues with release of beta-D-glucose.. This is Beta-glucosidase 16 from Arabidopsis thaliana (Mouse-ear cress).